We begin with the raw amino-acid sequence, 119 residues long: Beta-2-microglobulin (119 aa).

Residues 1–20 (MARFVVVALLVLLSLSGLEA) form the signal peptide. The Ig-like C1-type domain maps to 25 to 114 (PKIQVYSRHP…VTFSTPKTVK (90 aa)). Residues Cys-45 and Cys-100 are joined by a disulfide bond.

It belongs to the beta-2-microglobulin family. Heterodimer of an alpha chain and a beta chain. Beta-2-microglobulin is the beta-chain of major histocompatibility complex class I molecules.

Its subcellular location is the secreted. Component of the class I major histocompatibility complex (MHC). Involved in the presentation of peptide antigens to the immune system. The sequence is that of Beta-2-microglobulin (B2M) from Callimico goeldii (Goeldi's marmoset).